The primary structure comprises 330 residues: 5-dehydro-2-deoxygluconokinase (330 aa).

This sequence belongs to the carbohydrate kinase PfkB family.

It catalyses the reaction 5-dehydro-2-deoxy-D-gluconate + ATP = 6-phospho-5-dehydro-2-deoxy-D-gluconate + ADP + H(+). It participates in polyol metabolism; myo-inositol degradation into acetyl-CoA; acetyl-CoA from myo-inositol: step 5/7. In terms of biological role, catalyzes the phosphorylation of 5-dehydro-2-deoxy-D-gluconate (2-deoxy-5-keto-D-gluconate or DKG) to 6-phospho-5-dehydro-2-deoxy-D-gluconate (DKGP). This Bacillus velezensis (strain DSM 23117 / BGSC 10A6 / LMG 26770 / FZB42) (Bacillus amyloliquefaciens subsp. plantarum) protein is 5-dehydro-2-deoxygluconokinase.